The chain runs to 340 residues: Integral membrane protein SED5 (340 aa).

At 1–319 (MNIKDRTSEF…KYFDRIKSNR (319 aa)) the chain is on the cytoplasmic side. A disordered region spans residues 31-51 (RLQEKESENFANNTTGNGKSV). A compositionally biased stretch (polar residues) spans 39–51 (NFANNTTGNGKSV). The stretch at 146–173 (LNTQMKNISGSFKDVLEERQRLEMANKD) forms a coiled coil. The disordered stretch occupies residues 180–231 (TDTGHAPADDQTQSNHAADLTTYNNSNPFMTSLLDESSEKNNNSSNQGELSF). A compositionally biased stretch (polar residues) spans 189 to 209 (DQTQSNHAADLTTYNNSNPFM). Positions 249–311 (NVYLQERNRA…SGAQRELLKY (63 aa)) constitute a t-SNARE coiled-coil homology domain. A helical; Anchor for type IV membrane protein transmembrane segment spans residues 320-340 (WLAAKVFFIIFVFFVIWVLVN).

This sequence belongs to the syntaxin family. In terms of assembly, interacts with SLY1, STF1, SFB3 and GOS1.

It localises to the membrane. It is found in the golgi apparatus membrane. In terms of biological role, required for vesicular transport between the endoplasmic reticulum and the Golgi complex. Acts as a target organelle soluble NSF attachment protein receptor (t-SNARE). This chain is Integral membrane protein SED5 (SED5), found in Saccharomyces cerevisiae (strain ATCC 204508 / S288c) (Baker's yeast).